Consider the following 907-residue polypeptide: Clumping factor B (907 aa).

The N-terminal stretch at 1–44 (MKKRIDYLSNKQNKYSIRRFTVGTTSVIVGATILFGIGNHQAQA) is a signal peptide. A YSIRK-G/S signaling motif motif is present at residues 15-26 (YSIRRFTVGTTS). 2 stretches are compositionally biased toward polar residues: residues 44-61 (ASEQ…NASA) and 68-101 (MIET…KPMS). The disordered stretch occupies residues 44 to 191 (ASEQSNDTTQ…AQGTSKPSVR (148 aa)). A ligand binding A region region spans residues 45 to 542 (SEQSNDTTQS…GSADGDSAVN (498 aa)). Residues 102–119 (TQTSNTTTTEPASTNETP) are compositionally biased toward low complexity. A compositionally biased stretch (polar residues) spans 134–189 (QDQTVPQEANSQVDNKTTNDANSIATNSELKNPQTLDLPQSSPQTISNAQGTSKPS). Positions 272–276 (DYSNS) match the MIDAS-like motif motif. The segment at 530–879 (YGGGSADGDS…ETGDKSENTN (350 aa)) is disordered. Positions 545 to 555 (DPTPGPPVDPE) are enriched in pro residues. The span at 556–831 (PSPDPEPEPS…SDSDSDSDSD (276 aa)) shows a compositional bias: acidic residues. Over residues 835-846 (RVTPPNNEQKAP) the composition is skewed to polar residues. Residues 863–876 (HKTDALPETGDKSE) show a composition bias toward basic and acidic residues. An LPXTG sorting signal motif is present at residues 868–872 (LPETG). A Pentaglycyl murein peptidoglycan amidated threonine modification is found at threonine 871. The propeptide at 872–907 (GDKSENTNATLFGAMMALLGSLLLFRKRKQDHKEKA) is removed by sortase.

It belongs to the serine-aspartate repeat-containing protein (SDr) family. In terms of processing, proteolytically cleaved by aureolysin (aur). This cleavage leads to the inactivation of ClfB.

It localises to the secreted. The protein resides in the cell wall. In terms of biological role, cell surface-associated protein implicated in virulence by promoting bacterial attachment to both alpha- and beta-chains of human fibrinogen and inducing the formation of bacterial clumps. This Staphylococcus aureus (strain MW2) protein is Clumping factor B (clfB).